The following is a 92-amino-acid chain: Cell division topological specificity factor (92 aa).

Belongs to the MinE family.

In terms of biological role, prevents the cell division inhibition by proteins MinC and MinD at internal division sites while permitting inhibition at polar sites. This ensures cell division at the proper site by restricting the formation of a division septum at the midpoint of the long axis of the cell. In Syntrophobacter fumaroxidans (strain DSM 10017 / MPOB), this protein is Cell division topological specificity factor.